An 883-amino-acid chain; its full sequence is Envelope glycoprotein B (883 aa).

The signal sequence occupies residues M1–S31. Residues Q32 to P750 lie on the Virion surface side of the membrane. Intrachain disulfides connect C77–C535, C94–C491, C167–C229, C321–C369, and C558–C608. N-linked (GlcNAc...) asparagine; by host glycans are attached at residues N102 and N121. An involved in fusion and/or binding to host membrane region spans residues T134 to R140. N-linked (GlcNAc...) asparagine; by host glycosylation is present at N211. The involved in fusion and/or binding to host membrane stretch occupies residues H216–T223. N-linked (GlcNAc...) asparagine; by host glycans are attached at residues N262 and N360. Positions Q428 to I457 are disordered. Residues N579, N635, and N649 are each glycosylated (N-linked (GlcNAc...) asparagine; by host). Hydrophobic membrane proximal region stretches follow at residues I694–S748 and A724–A744. A helical membrane pass occupies residues F751–F771. Topologically, residues K772–E883 are intravirion. The segment at P791–D817 is disordered. Over residues D806–D817 the composition is skewed to acidic residues. The Internalization motif signature appears at Y868–L871.

This sequence belongs to the herpesviridae glycoprotein B family. In terms of assembly, homotrimer; disulfide-linked. Binds to heparan sulfate proteoglycans. Interacts with gH/gL heterodimer. In terms of processing, a proteolytic cleavage by host furin generates two subunits that remain linked by disulfide bonds.

It localises to the virion membrane. The protein localises to the host cell membrane. The protein resides in the host endosome membrane. It is found in the host Golgi apparatus membrane. Envelope glycoprotein that forms spikes at the surface of virion envelope. Essential for the initial attachment to heparan sulfate moieties of the host cell surface proteoglycans. Involved in fusion of viral and cellular membranes leading to virus entry into the host cell. Following initial binding to its host receptors, membrane fusion is mediated by the fusion machinery composed at least of gB and the heterodimer gH/gL. May be involved in the fusion between the virion envelope and the outer nuclear membrane during virion egress. The polypeptide is Envelope glycoprotein B (Infectious laryngotracheitis virus (strain SA-2) (ILTV)).